The following is a 399-amino-acid chain: Leu/Ile/Val-binding protein homolog 7 (399 aa).

A signal peptide spans 1-22 (MEKHLIALSVAALLAGAAPASA).

The protein belongs to the leucine-binding protein family.

Component of an amino-acid transport system. This chain is Leu/Ile/Val-binding protein homolog 7, found in Brucella suis biovar 1 (strain 1330).